The primary structure comprises 213 residues: Thymidylate kinase (213 aa).

Residue 10–17 (GLEGAGKT) participates in ATP binding.

Belongs to the thymidylate kinase family.

The enzyme catalyses dTMP + ATP = dTDP + ADP. In terms of biological role, phosphorylation of dTMP to form dTDP in both de novo and salvage pathways of dTTP synthesis. The protein is Thymidylate kinase of Escherichia coli O6:K15:H31 (strain 536 / UPEC).